Reading from the N-terminus, the 62-residue chain is Lepidopteran-selective toxin (62 aa).

Residues 1-24 form the signal peptide; that stretch reads MKFLYGVILIALFLTVMTATLSEA. Intrachain disulfides connect C26–C43, C29–C51, C40–C56, and C44–C58. A propeptide is located at residue Y62.

The protein belongs to the short scorpion toxin superfamily. Chloride channel inhibitor family. As to expression, expressed by the venom gland.

It is found in the secreted. In terms of biological role, toxin with unknown function in healthy organisms. On glioma cells, interacts with chloride channels (probably ClC-3/CLCN3) and MMP2 at the surface of glioma cells. This complex is then internalized via caveolae, thus inhibiting the chloride channels necessary for cell shrinkage and tumor propagation. Induces flaccid paralysis in H.virescens larvae. Is not toxic to S.falculata larvae or mice. The sequence is that of Lepidopteran-selective toxin from Hottentotta tamulus (Eastern Indian scorpion).